We begin with the raw amino-acid sequence, 600 residues long: NADH-quinone oxidoreductase subunit C/D (600 aa).

The interval 1-190 (MVNNMTDLTA…SPFELTKAKQ (190 aa)) is NADH dehydrogenase I subunit C. The interval 214-600 (DFMFLNLGPN…IDFVMSDVDR (387 aa)) is NADH dehydrogenase I subunit D.

This sequence in the N-terminal section; belongs to the complex I 30 kDa subunit family. The protein in the C-terminal section; belongs to the complex I 49 kDa subunit family. In terms of assembly, NDH-1 is composed of 13 different subunits. Subunits NuoB, CD, E, F, and G constitute the peripheral sector of the complex.

The protein resides in the cell inner membrane. The enzyme catalyses a quinone + NADH + 5 H(+)(in) = a quinol + NAD(+) + 4 H(+)(out). In terms of biological role, NDH-1 shuttles electrons from NADH, via FMN and iron-sulfur (Fe-S) centers, to quinones in the respiratory chain. The immediate electron acceptor for the enzyme in this species is believed to be ubiquinone. Couples the redox reaction to proton translocation (for every two electrons transferred, four hydrogen ions are translocated across the cytoplasmic membrane), and thus conserves the redox energy in a proton gradient. The sequence is that of NADH-quinone oxidoreductase subunit C/D from Escherichia coli O6:H1 (strain CFT073 / ATCC 700928 / UPEC).